The primary structure comprises 305 residues: Homoserine O-acetyltransferase (305 aa).

The Acyl-thioester intermediate role is filled by cysteine 142. The substrate site is built by lysine 163 and serine 192. Histidine 235 functions as the Proton acceptor in the catalytic mechanism. Residue glutamate 237 is part of the active site. Arginine 249 is a binding site for substrate.

The protein belongs to the MetA family.

The protein resides in the cytoplasm. The catalysed reaction is L-homoserine + acetyl-CoA = O-acetyl-L-homoserine + CoA. It functions in the pathway amino-acid biosynthesis; L-methionine biosynthesis via de novo pathway; O-acetyl-L-homoserine from L-homoserine: step 1/1. Its function is as follows. Transfers an acetyl group from acetyl-CoA to L-homoserine, forming acetyl-L-homoserine. This chain is Homoserine O-acetyltransferase, found in Roseobacter denitrificans (strain ATCC 33942 / OCh 114) (Erythrobacter sp. (strain OCh 114)).